The following is a 481-amino-acid chain: UDP-N-acetylmuramoyl-L-alanyl-D-glutamate--L-lysine ligase (481 aa).

Residue Ser42 participates in UDP-N-acetyl-alpha-D-muramoyl-L-alanyl-D-glutamate binding. Residue 118-124 participates in ATP binding; that stretch reads GTKGKTT. UDP-N-acetyl-alpha-D-muramoyl-L-alanyl-D-glutamate is bound by residues Gln158, 160 to 161, Ser187, and Arg195; that span reads TT. Lys229 carries the post-translational modification N6-carboxylysine. The short motif at 404–407 is the L-lysine recognition motif element; the sequence is DDPN.

Belongs to the MurCDEF family. MurE subfamily. Post-translationally, carboxylation is probably crucial for Mg(2+) binding and, consequently, for the gamma-phosphate positioning of ATP.

Its subcellular location is the cytoplasm. It catalyses the reaction UDP-N-acetyl-alpha-D-muramoyl-L-alanyl-D-glutamate + L-lysine + ATP = UDP-N-acetyl-alpha-D-muramoyl-L-alanyl-gamma-D-glutamyl-L-lysine + ADP + phosphate + H(+). It participates in cell wall biogenesis; peptidoglycan biosynthesis. Functionally, catalyzes the addition of L-lysine to the nucleotide precursor UDP-N-acetylmuramoyl-L-alanyl-D-glutamate (UMAG) in the biosynthesis of bacterial cell-wall peptidoglycan. This chain is UDP-N-acetylmuramoyl-L-alanyl-D-glutamate--L-lysine ligase, found in Streptococcus pyogenes serotype M3 (strain SSI-1).